Consider the following 247-residue polypeptide: UPF0273 protein PF1931 (247 aa).

One can recognise a KaiC domain in the interval 3 to 247; the sequence is RRVKTGIPGM…VLKRGRIYEL (245 aa). ATP is bound at residue 30-37; sequence GGPGTGKS.

The protein belongs to the UPF0273 family.

This chain is UPF0273 protein PF1931, found in Pyrococcus furiosus (strain ATCC 43587 / DSM 3638 / JCM 8422 / Vc1).